Here is a 447-residue protein sequence, read N- to C-terminus: UPF0210 protein OEOE_0945 (447 aa).

It belongs to the UPF0210 family. In terms of assembly, homodimer.

The sequence is that of UPF0210 protein OEOE_0945 from Oenococcus oeni (strain ATCC BAA-331 / PSU-1).